A 250-amino-acid chain; its full sequence is MAKPRNAAESKAAKAQANAARKAAARQRRAQLWQAFTLQRKEDKRLLPYMIGAFLLIVGASVGVGVWAGGFTMFTMIPLGVLLGALVAFVIFGRRAQRTVYRKAEGQTGAAAWALDNLRGKWRVTPGVAATGNLDAVHRVIGRPGVIFVGEGSAARVKPLLAQEKKRTARLVGDVPIYDIIVGNGDGEVPLAKLERHLTRLPANITVKQMDTVESRLAALGSRAGAGVMPKGPLPTTAKMRSVQRTVRRK.

An N-terminal signal peptide occupies residues 1–19 (MAKPRNAAESKAAKAQANA). 2 helical membrane-spanning segments follow: residues 51-71 (IGAF…AGGF) and 73-93 (MFTM…VIFG). Residues 226–250 (AGVMPKGPLPTTAKMRSVQRTVRRK) are disordered.

Its subcellular location is the cell membrane. This is an uncharacterized protein from Mycobacterium tuberculosis (strain CDC 1551 / Oshkosh).